Reading from the N-terminus, the 421-residue chain is Hydrolyase poxO (421 aa).

The Nucleophile role is filled by Ser-239.

Belongs to the AB hydrolase superfamily. FUS2 hydrolase family. In terms of assembly, homodimer.

Its pathway is secondary metabolite biosynthesis. In terms of biological role, hydrolyase; part of the gene cluster that mediates the biosynthesis of oxaleimides, cytotoxic compounds containing an unusual disubstituted succinimide moiety. The first step of the pathway is provided by the HR-PKS poxF that serves in a new mode of collaborative biosynthesis with the PKS-NRPS poxE, by providing the olefin containing amino acid substrate via the synthesis of an ACP-bound dec-4-enoate. The cytochrome P450 monooxygenase poxM-catalyzed oxidation at the alpha-position creates the enzyme-bound 2-hydroxydec-4-enoyl-ACP thioester, which may be prone to spontaneous hydrolysis to yield 2-hydroxydec-4-enoic acid due to increased electrophilicity of the carbonyl. 2-hydroxydec-4-enoic acid can then be further oxidized by poxM to yield the alpha-ketoacid 2-oxodec-4-enoicacid, which is reductively aminated by the aminotransferase poxL to yield (S,E)-2-aminodec-4-enoic acid. The Hybrid PKS-NRPS synthetase poxE then performs condensation between the octaketide product of its PKS modules and the amino group of (S,E)-2-aminodec-4-enoic acid which is activated and incorporated by the adenylation domain. The resulting aminoacyl product can be cyclized by the Diels-Alderase PoxQ and reductively released by the reductive (R) domain of poxE to yield an aldehyde intermediate. The released aldehyde is then substrate for a Knoevenagel condensation by the hydrolyase poxO followed by an oxidation at the 5-position of the pyrrolidone ring. The presence of the olefin from the amino acid building block allows for migration of the substituted allyl group to occur. This allylic transposition reaction takes place in a conjugate addition, semipinacol-like fashion to yield a succinimide intermediate. Iterative two-electron oxidations of the C7 methyl of the succinimide intermediate to the carboxylic acid can be catalyzed by one of two remaining cytochrome P450 monooxygenasess poxC or poxD to yield oxaleimide A. Subsequent oxidation yields the maleimide scaffold oxaleimide I. Both oxaleimide A and oxaleimide I can undergo oxidative modifications in the decalin ring to yield the series of products oxaleimides B to H. This chain is Hydrolyase poxO, found in Penicillium oxalicum.